The chain runs to 189 residues: GTP cyclohydrolase 1 (189 aa).

Cysteine 78, histidine 81, and cysteine 150 together coordinate Zn(2+).

Belongs to the GTP cyclohydrolase I family. Homomer.

The enzyme catalyses GTP + H2O = 7,8-dihydroneopterin 3'-triphosphate + formate + H(+). It participates in cofactor biosynthesis; 7,8-dihydroneopterin triphosphate biosynthesis; 7,8-dihydroneopterin triphosphate from GTP: step 1/1. This is GTP cyclohydrolase 1 from Lysinibacillus sphaericus (strain C3-41).